The sequence spans 137 residues: Ribosome-binding factor A (137 aa).

This sequence belongs to the RbfA family. As to quaternary structure, monomer. Binds 30S ribosomal subunits, but not 50S ribosomal subunits or 70S ribosomes.

Its subcellular location is the cytoplasm. Functionally, one of several proteins that assist in the late maturation steps of the functional core of the 30S ribosomal subunit. Associates with free 30S ribosomal subunits (but not with 30S subunits that are part of 70S ribosomes or polysomes). Required for efficient processing of 16S rRNA. May interact with the 5'-terminal helix region of 16S rRNA. The sequence is that of Ribosome-binding factor A from Rhodopseudomonas palustris (strain TIE-1).